The chain runs to 392 residues: Probable protein phosphatase 2C 78 (392 aa).

The PPM-type phosphatase domain occupies Ala39–Leu342. Mn(2+)-binding residues include Asp73, Gly74, Asp274, and Asp333.

This sequence belongs to the PP2C family. It depends on Mg(2+) as a cofactor. The cofactor is Mn(2+).

It catalyses the reaction O-phospho-L-seryl-[protein] + H2O = L-seryl-[protein] + phosphate. It carries out the reaction O-phospho-L-threonyl-[protein] + H2O = L-threonyl-[protein] + phosphate. The polypeptide is Probable protein phosphatase 2C 78 (Oryza sativa subsp. japonica (Rice)).